The sequence spans 194 residues: Holliday junction branch migration complex subunit RuvA (194 aa).

Residues 1-64 (MISSLNGILE…EDALSLFGFA (64 aa)) form a domain I region. The segment at 65–143 (TTEELSLFET…KNWEAGVLSQ (79 aa)) is domain II. The segment at 144–149 (VTEANS) is flexible linker. Residues 149–194 (SDILATLTALGYSSSEAAKAISSLGDNGDLPLEERIKLALNYFNNK) are domain III.

The protein belongs to the RuvA family. Homotetramer. Forms an RuvA(8)-RuvB(12)-Holliday junction (HJ) complex. HJ DNA is sandwiched between 2 RuvA tetramers; dsDNA enters through RuvA and exits via RuvB. An RuvB hexamer assembles on each DNA strand where it exits the tetramer. Each RuvB hexamer is contacted by two RuvA subunits (via domain III) on 2 adjacent RuvB subunits; this complex drives branch migration. In the full resolvosome a probable DNA-RuvA(4)-RuvB(12)-RuvC(2) complex forms which resolves the HJ.

The protein localises to the cytoplasm. In terms of biological role, the RuvA-RuvB-RuvC complex processes Holliday junction (HJ) DNA during genetic recombination and DNA repair, while the RuvA-RuvB complex plays an important role in the rescue of blocked DNA replication forks via replication fork reversal (RFR). RuvA specifically binds to HJ cruciform DNA, conferring on it an open structure. The RuvB hexamer acts as an ATP-dependent pump, pulling dsDNA into and through the RuvAB complex. HJ branch migration allows RuvC to scan DNA until it finds its consensus sequence, where it cleaves and resolves the cruciform DNA. In Dehalococcoides mccartyi (strain CBDB1), this protein is Holliday junction branch migration complex subunit RuvA.